We begin with the raw amino-acid sequence, 210 residues long: Ribosomal RNA small subunit methyltransferase G (210 aa).

S-adenosyl-L-methionine contacts are provided by residues G76, L81, V127–E128, and R142.

Belongs to the methyltransferase superfamily. RNA methyltransferase RsmG family.

The protein resides in the cytoplasm. The catalysed reaction is guanosine(527) in 16S rRNA + S-adenosyl-L-methionine = N(7)-methylguanosine(527) in 16S rRNA + S-adenosyl-L-homocysteine. In terms of biological role, specifically methylates the N7 position of guanine in position 527 of 16S rRNA. In Vibrio atlanticus (strain LGP32) (Vibrio splendidus (strain Mel32)), this protein is Ribosomal RNA small subunit methyltransferase G.